The primary structure comprises 413 residues: Isobutyryl-CoA dehydrogenase, mitochondrial (413 aa).

A mitochondrion-targeting transit peptide spans 1–20 (MAMLRSGYRRFGCLRAALKS). Lysine 48 carries the N6-acetyllysine; alternate modification. Lysine 48 is modified (N6-succinyllysine; alternate). Residues 156–165 (YCLTEPGSGS) and 189–191 (FIS) contribute to the FAD site. Residue serine 165 participates in substrate binding. N6-succinyllysine is present on lysine 211. Residue lysine 229 is modified to N6-acetyllysine. Position 269 is an N6-succinyllysine (lysine 269). 272 to 275 (NGGR) contacts substrate. Residues arginine 300, 310–311 (SQ), and 369–373 (QMHGG) contribute to the FAD site. Glutamate 396 functions as the Proton acceptor in the catalytic mechanism. Residue 398-400 (SNE) coordinates FAD. Position 408 (arginine 408) interacts with substrate.

Belongs to the acyl-CoA dehydrogenase family. Homotetramer, formed by a dimer of dimers. Requires FAD as cofactor.

It is found in the mitochondrion. It carries out the reaction 2-methylpropanoyl-CoA + oxidized [electron-transfer flavoprotein] + H(+) = 2-methylpropenoyl-CoA + reduced [electron-transfer flavoprotein]. It catalyses the reaction (2S)-2-methylbutanoyl-CoA + oxidized [electron-transfer flavoprotein] + H(+) = (2E)-2-methylbut-2-enoyl-CoA + reduced [electron-transfer flavoprotein]. The catalysed reaction is propanoyl-CoA + oxidized [electron-transfer flavoprotein] + H(+) = acryloyl-CoA + reduced [electron-transfer flavoprotein]. The protein operates within amino-acid degradation; L-valine degradation. Its function is as follows. Isobutyryl-CoA dehydrogenase which catalyzes the conversion of 2-methylpropanoyl-CoA to (2E)-2-methylpropenoyl-CoA in the valine catabolic pathway. To a lesser extent, also able to catalyze the oxidation of (2S)-2-methylbutanoyl-CoA. This Mus musculus (Mouse) protein is Isobutyryl-CoA dehydrogenase, mitochondrial.